The following is a 670-amino-acid chain: DNA ligase (670 aa).

Residues 34 to 38 (DAEYD), 84 to 85 (SL), 116 to 119 (EHKV), arginine 139, glutamate 174, tyrosine 226, lysine 291, and lysine 315 each bind NAD(+). The active-site N6-AMP-lysine intermediate is the lysine 118. Zn(2+)-binding residues include cysteine 409, cysteine 412, cysteine 425, and cysteine 430. Residues 586–670 (EVSDLLSGLT…LKEKGAPVPA (85 aa)) enclose the BRCT domain.

This sequence belongs to the NAD-dependent DNA ligase family. LigA subfamily. It depends on Mg(2+) as a cofactor.

The catalysed reaction is NAD(+) + (deoxyribonucleotide)n-3'-hydroxyl + 5'-phospho-(deoxyribonucleotide)m = (deoxyribonucleotide)n+m + AMP + beta-nicotinamide D-nucleotide.. DNA ligase that catalyzes the formation of phosphodiester linkages between 5'-phosphoryl and 3'-hydroxyl groups in double-stranded DNA using NAD as a coenzyme and as the energy source for the reaction. It is essential for DNA replication and repair of damaged DNA. In Thermus filiformis, this protein is DNA ligase.